Consider the following 414-residue polypeptide: Chromobox protein homolog 6 (414 aa).

Positions 11–69 (FAAESIIKRRIRKGRIEYLVKWKGWAIKYSTWEPEENILDSRLIAAFEQKERERELYGP) constitute a Chromo domain. Ser107 is modified (phosphoserine). Disordered stretches follow at residues 127–152 (HRMS…PISP), 267–308 (APFD…VPNW), and 344–365 (ALEP…PEMS). Low complexity predominate over residues 267-287 (APFDAHSSSSSGCPSPTLQSS).

In terms of assembly, component of a PRC1-like complex. Distinct PRC1-like core complexes are composed of a RING1 subunit (RING1B or RING1A), one of the six PCGF proteins (PCGF1-6), one PHC protein (PHC1-3) and one of the CBX proteins (CBX2, CBX4, CBX6, CBX7 or CBX8). Interacts with PCGF1, PCGF2, PCGF3, BMI1, PCGF5, PCGF6, RING1 and RNF2. May interact with H3C15 and H3C1. Interacts (via chromodomain) with single-stranded RNA (ssRNA). In terms of processing, ubiquitinated. Ubiquitination regulates the function of the Polycomb group (PcG) multiprotein PRC1-like complex. Deubiquitinated by USP26. Expressed in mouse embryonic stem cells.

The protein resides in the nucleus. Its subcellular location is the chromosome. In terms of biological role, component of a Polycomb group (PcG) multiprotein PRC1-like complex, a complex class required to maintain the transcriptionally repressive state of many genes, including Hox genes, throughout development. PcG PRC1 complex acts via chromatin remodeling and modification of histones; it mediates monoubiquitination of histone H2A 'Lys-119', rendering chromatin heritably changed in its expressibility. Possibly contributes to the target selectivity of the PRC1 complex by binding specific regions of chromatin. Recruitment to chromatin might occur in an H3K27me3-independent fashion. May have a PRC1-independent function in embryonic stem cells. In Mus musculus (Mouse), this protein is Chromobox protein homolog 6 (Cbx6).